We begin with the raw amino-acid sequence, 186 residues long: Peptidyl-tRNA hydrolase (186 aa).

Tyrosine 14 provides a ligand contact to tRNA. The Proton acceptor role is filled by histidine 19. Positions 64, 66, and 112 each coordinate tRNA.

Belongs to the PTH family. Monomer.

It localises to the cytoplasm. The enzyme catalyses an N-acyl-L-alpha-aminoacyl-tRNA + H2O = an N-acyl-L-amino acid + a tRNA + H(+). Its function is as follows. Hydrolyzes ribosome-free peptidyl-tRNAs (with 1 or more amino acids incorporated), which drop off the ribosome during protein synthesis, or as a result of ribosome stalling. Catalyzes the release of premature peptidyl moieties from peptidyl-tRNA molecules trapped in stalled 50S ribosomal subunits, and thus maintains levels of free tRNAs and 50S ribosomes. The sequence is that of Peptidyl-tRNA hydrolase from Lachnospira eligens (strain ATCC 27750 / DSM 3376 / VPI C15-48 / C15-B4) (Eubacterium eligens).